The chain runs to 419 residues: ADIPOR-like receptor IZH3 (419 aa).

A disordered region spans residues 1–65 (MSHPNTHMPR…GEAGGGRSVL (65 aa)). At 1–147 (MSHPNTHMPR…LNAYGWHNET (147 aa)) the chain is on the lumenal side. An N-linked (GlcNAc...) asparagine glycan is attached at Asn145. Residues 148 to 168 (INIWSHLVGAAVLAYLLCWGW) form a helical membrane-spanning segment. Over 169 to 184 (PRSDVYRAAQVPRLAK) the chain is Cytoplasmic. The chain crosses the membrane as a helical span at residues 185 to 205 (WAIGAFLACGVKCMASSVAWH). At 206–225 (TFNGTCHLKLRSRFVCVDYT) the chain is on the lumenal side. Asn208 carries N-linked (GlcNAc...) asparagine glycosylation. Residues 226–246 (GITLLVTASVVTTVAVTLYGL) form a helical membrane-spanning segment. Residues 247–249 (SRP) are Cytoplasmic-facing. A helical membrane pass occupies residues 250-270 (LMYAYMVASIGLGTAAGVMNW). Residues 271–283 (SPHFDRPEARPLR) are Lumenal-facing. The chain crosses the membrane as a helical span at residues 284–304 (IAVYVGLAALGLVSFVHVWMQ). Residues 305–311 (VRWASAH) lie on the Cytoplasmic side of the membrane. A helical membrane pass occupies residues 312–332 (LMAPLVYKSLVWYGIGVVFYA). Residues 333–377 (TLVPERWRSDVTLDCCSGPVHEAACRQFRDLPPVARKDRQFWSLW) are Lumenal-facing. A helical membrane pass occupies residues 378 to 398 (WVDYFCHSHFLWHVFVVLGVV). At 399–419 (GHYRAVLQMSRIVWLDAGRAF) the chain is on the cytoplasmic side.

It belongs to the ADIPOR family.

Its subcellular location is the endoplasmic reticulum membrane. Its function is as follows. ADIPOR-like receptor involved in zinc metabolism either by altering membrane sterol content or by directly altering cellular zinc levels. This chain is ADIPOR-like receptor IZH3 (IZH3), found in Eremothecium gossypii (strain ATCC 10895 / CBS 109.51 / FGSC 9923 / NRRL Y-1056) (Yeast).